Here is a 467-residue protein sequence, read N- to C-terminus: UDP-N-acetylmuramate--L-alanine ligase (467 aa).

114–120 (GTHGKTT) is an ATP binding site.

This sequence belongs to the MurCDEF family.

Its subcellular location is the cytoplasm. The catalysed reaction is UDP-N-acetyl-alpha-D-muramate + L-alanine + ATP = UDP-N-acetyl-alpha-D-muramoyl-L-alanine + ADP + phosphate + H(+). Its pathway is cell wall biogenesis; peptidoglycan biosynthesis. Cell wall formation. The polypeptide is UDP-N-acetylmuramate--L-alanine ligase (Nitrobacter winogradskyi (strain ATCC 25391 / DSM 10237 / CIP 104748 / NCIMB 11846 / Nb-255)).